A 27-amino-acid polypeptide reads, in one-letter code: MQLFHLCLIIFCSCPTVQASKLCLGWL.

This chain is Truncated HBeAg protein (C), found in Homo sapiens (Human).